Consider the following 205-residue polypeptide: Small ribosomal subunit protein uS3 (205 aa).

The KH type-2 domain occupies 12–80 (VRQFLAKELA…PAQINIAEVR (69 aa)).

It belongs to the universal ribosomal protein uS3 family. In terms of assembly, part of the 30S ribosomal subunit. Forms a tight complex with proteins S10 and S14.

In terms of biological role, binds the lower part of the 30S subunit head. Binds mRNA in the 70S ribosome, positioning it for translation. The sequence is that of Small ribosomal subunit protein uS3 from Buchnera aphidicola subsp. Acyrthosiphon kondoi (Acyrthosiphon kondoi symbiotic bacterium).